The chain runs to 296 residues: mRNA export factor rsm1 (296 aa).

The C3HC-type zinc-finger motif lies at 40 to 174 (PWSREEFLRR…VSTHLPEEMT (135 aa)).

Its subcellular location is the cytoplasm. The protein resides in the nucleus. Functionally, involved in the export of mRNA from the nucleus to the cytoplasm. This Schizosaccharomyces pombe (strain 972 / ATCC 24843) (Fission yeast) protein is mRNA export factor rsm1 (rsm1).